The following is a 269-amino-acid chain: Hydroxyethylthiazole kinase (269 aa).

Met-43 contacts substrate. Residues Arg-119 and Ser-165 each coordinate ATP. A substrate-binding site is contributed by Ala-192.

The protein belongs to the Thz kinase family. It depends on Mg(2+) as a cofactor.

It carries out the reaction 5-(2-hydroxyethyl)-4-methylthiazole + ATP = 4-methyl-5-(2-phosphooxyethyl)-thiazole + ADP + H(+). It participates in cofactor biosynthesis; thiamine diphosphate biosynthesis; 4-methyl-5-(2-phosphoethyl)-thiazole from 5-(2-hydroxyethyl)-4-methylthiazole: step 1/1. In terms of biological role, catalyzes the phosphorylation of the hydroxyl group of 4-methyl-5-beta-hydroxyethylthiazole (THZ). This chain is Hydroxyethylthiazole kinase, found in Glaesserella parasuis serovar 5 (strain SH0165) (Haemophilus parasuis).